The sequence spans 109 residues: Ferredoxin (109 aa).

4Fe-4S ferredoxin-type domains follow at residues 2–30 (TYVV…YEGE) and 31–60 (FMLV…PESP). [3Fe-4S] cluster-binding residues include Cys-9 and Cys-17. Cys-21, Cys-40, Cys-43, and Cys-46 together coordinate [4Fe-4S] cluster. Cys-50 provides a ligand contact to [3Fe-4S] cluster.

Requires [4Fe-4S] cluster as cofactor. [3Fe-4S] cluster serves as cofactor.

Its function is as follows. Ferredoxins are iron-sulfur proteins that transfer electrons in a wide variety of metabolic reactions. This Rickettsia prowazekii (strain Madrid E) protein is Ferredoxin (fdxA).